Consider the following 242-residue polypeptide: Purine nucleoside phosphorylase PA4543 (242 aa).

Zn(2+)-binding residues include His69, Cys103, and His120.

This sequence belongs to the purine nucleoside phosphorylase YfiH/LACC1 family. Homodimer. The cofactor is Cu(2+). Requires Zn(2+) as cofactor.

It carries out the reaction adenosine + phosphate = alpha-D-ribose 1-phosphate + adenine. The catalysed reaction is S-methyl-5'-thioadenosine + phosphate = 5-(methylsulfanyl)-alpha-D-ribose 1-phosphate + adenine. The enzyme catalyses inosine + phosphate = alpha-D-ribose 1-phosphate + hypoxanthine. It catalyses the reaction adenosine + H2O + H(+) = inosine + NH4(+). Its function is as follows. Purine nucleoside enzyme that catalyzes the phosphorolysis of adenosine and inosine nucleosides, yielding D-ribose 1-phosphate and the respective free bases, adenine and hypoxanthine. Also catalyzes the phosphorolysis of S-methyl-5'-thioadenosine into adenine and S-methyl-5-thio-alpha-D-ribose 1-phosphate. Also has adenosine deaminase activity. The sequence is that of Purine nucleoside phosphorylase PA4543 from Pseudomonas aeruginosa (strain ATCC 15692 / DSM 22644 / CIP 104116 / JCM 14847 / LMG 12228 / 1C / PRS 101 / PAO1).